Consider the following 245-residue polypeptide: Complement C1q subcomponent subunit C (245 aa).

The N-terminal stretch at 1 to 28 (MVVGTSCQPQHGLYLLLLLLALPLRSQA) is a signal peptide. The Collagen-like domain maps to 31-112 (GCYGIPGMPG…GPPGEPGEEG (82 aa)). Pro36, Pro39, Pro42, Pro45, and Pro63 each carry 4-hydroxyproline. The disordered stretch occupies residues 42-119 (PGTPGKDGHD…EEGRYKQKHQ (78 aa)). A 5-hydroxylysine modification is found at Lys75. O-linked (Gal...) hydroxylysine glycosylation occurs at Lys75. Pro81, Pro96, Pro99, and Pro105 each carry 4-hydroxyproline. A compositionally biased stretch (pro residues) spans 98–107 (DPGPRGPPGE). Residues 115-245 (KQKHQSVFTV…VFSGFLLFPD (131 aa)) enclose the C1q domain. An intrachain disulfide couples Cys179 to Cys193.

As to quaternary structure, core component of the complement C1 complex, a calcium-dependent complex composed of 1 molecule of the C1Q subcomplex, 2 molecules of C1R and 2 molecules of C1S. The C1Q subcomplex is composed 18 subunits: 3 chains of C1QA, C1QB, and C1QC trimerize to form 6 collagen-like triple helices connected to six globular ligand-recognition modules (C1q domain). In terms of processing, O-linked glycans consist of Glc-Gal disaccharides bound to the oxygen atom of post-translationally added hydroxyl groups.

Its subcellular location is the secreted. The protein localises to the cell surface. Its activity is regulated as follows. The C1Q subcomplex is inhibited by sulfated molecules, such as triterpenoid sulfates, heparan sulfate, or chondroitin sulfates. Its function is as follows. Core component of the complement C1 complex, a multiprotein complex that initiates the classical pathway of the complement system, a cascade of proteins that leads to phagocytosis and breakdown of pathogens and signaling that strengthens the adaptive immune system. The classical complement pathway is initiated by the C1Q subcomplex of the C1 complex, which specifically binds IgG or IgM immunoglobulins complexed with antigens, forming antigen-antibody complexes on the surface of pathogens: C1QA, together with C1QB and C1QC, specifically recognizes and binds the Fc regions of IgG or IgM via its C1q domain. Immunoglobulin-binding activates the proenzyme C1R, which cleaves C1S, initiating the proteolytic cascade of the complement system. The C1Q subcomplex is activated by a hexamer of IgG complexed with antigens, while it is activated by a pentameric IgM. The C1Q subcomplex also recognizes and binds phosphatidylserine exposed on the surface of cells undergoing programmed cell death, possibly promoting activation of the complement system. This chain is Complement C1q subcomponent subunit C, found in Rattus norvegicus (Rat).